Reading from the N-terminus, the 60-residue chain is UPF0181 protein ESA_01442 (60 aa).

This sequence belongs to the UPF0181 family.

This chain is UPF0181 protein ESA_01442, found in Cronobacter sakazakii (strain ATCC BAA-894) (Enterobacter sakazakii).